A 170-amino-acid chain; its full sequence is Peptidyl-prolyl cis-trans isomerase ESS1 (170 aa).

A WW domain is found at 9-43 (TGLPTPWTVRYSKSKKREYFFNPETKHSQWEEPEG). The segment at 30–53 (NPETKHSQWEEPEGTNKDQLHKHL) is disordered. Basic and acidic residues predominate over residues 32–53 (ETKHSQWEEPEGTNKDQLHKHL). The PpiC domain occupies 57 to 170 (PVRVRCLHIL…SGVHVIKRVG (114 aa)). Ser161 is modified (phosphoserine).

Belongs to the PpiC/parvulin rotamase family. In terms of assembly, interacts with the RNA polymerase II largest subunit (RPB1) and with the SIN1-RDP3 HDAC subunit SIN3.

The protein resides in the cytoplasm. The protein localises to the nucleus. It carries out the reaction [protein]-peptidylproline (omega=180) = [protein]-peptidylproline (omega=0). With respect to regulation, inhibited by 5-hydroxy-1,4-naphthoquinone (juglone), but not by FK506 or cyclosporin A. Essential PPIase specific for phosphoserine and phosphothreonine N-terminal to the proline residue. Required for efficient pre-mRNA 3'-end processing and transcription termination, probably by inducing conformational changes by proline-directed isomerization in the C-terminal domain (CTD) of RPB1, thereby altering cofactor binding with the RNA polymerase II transcription complex. Also targets the SIN3-RPD3 histone deacetylase complex (HDAC). This Saccharomyces cerevisiae (strain ATCC 204508 / S288c) (Baker's yeast) protein is Peptidyl-prolyl cis-trans isomerase ESS1 (ESS1).